We begin with the raw amino-acid sequence, 331 residues long: Ribose-phosphate pyrophosphokinase (331 aa).

An ATP-binding site is contributed by 55 to 57; the sequence is DGE. His148 and Asp187 together coordinate Mg(2+). The active site involves Lys211. D-ribose 5-phosphate contacts are provided by residues Arg213, Asp237, and 241 to 245; that span reads DTGGT.

The protein belongs to the ribose-phosphate pyrophosphokinase family. Class I subfamily. Homohexamer. Mg(2+) serves as cofactor.

Its subcellular location is the cytoplasm. The catalysed reaction is D-ribose 5-phosphate + ATP = 5-phospho-alpha-D-ribose 1-diphosphate + AMP + H(+). It participates in metabolic intermediate biosynthesis; 5-phospho-alpha-D-ribose 1-diphosphate biosynthesis; 5-phospho-alpha-D-ribose 1-diphosphate from D-ribose 5-phosphate (route I): step 1/1. In terms of biological role, involved in the biosynthesis of the central metabolite phospho-alpha-D-ribosyl-1-pyrophosphate (PRPP) via the transfer of pyrophosphoryl group from ATP to 1-hydroxyl of ribose-5-phosphate (Rib-5-P). This Prochlorococcus marinus subsp. pastoris (strain CCMP1986 / NIES-2087 / MED4) protein is Ribose-phosphate pyrophosphokinase.